The following is a 193-amino-acid chain: CDP-diacylglycerol--glycerol-3-phosphate 3-phosphatidyltransferase (193 aa).

Transmembrane regions (helical) follow at residues 8–28 (ITLA…APFD), 39–59 (IPVA…TDWV), 88–108 (AALI…IVII), and 157–177 (LVSF…TVVS).

It belongs to the CDP-alcohol phosphatidyltransferase class-I family.

It localises to the cell membrane. It catalyses the reaction a CDP-1,2-diacyl-sn-glycerol + sn-glycerol 3-phosphate = a 1,2-diacyl-sn-glycero-3-phospho-(1'-sn-glycero-3'-phosphate) + CMP + H(+). The protein operates within phospholipid metabolism; phosphatidylglycerol biosynthesis; phosphatidylglycerol from CDP-diacylglycerol: step 1/2. Its function is as follows. This protein catalyzes the committed step to the synthesis of the acidic phospholipids. In Bacillus subtilis (strain 168), this protein is CDP-diacylglycerol--glycerol-3-phosphate 3-phosphatidyltransferase (pgsA).